The chain runs to 29 residues: MTKNKFVLLRYLCLFCTNIDQIDFNSVLK.

The protein resides in the plastid. Its subcellular location is the chloroplast. This is an uncharacterized protein from Trieres chinensis (Marine centric diatom).